Here is a 619-residue protein sequence, read N- to C-terminus: Dihydroxy-acid dehydratase (619 aa).

Residue aspartate 81 participates in Mg(2+) binding. Cysteine 122 is a binding site for [2Fe-2S] cluster. 2 residues coordinate Mg(2+): aspartate 123 and lysine 124. Position 124 is an N6-carboxylysine (lysine 124). Residue cysteine 195 coordinates [2Fe-2S] cluster. Glutamate 491 provides a ligand contact to Mg(2+). Serine 517 acts as the Proton acceptor in catalysis.

Belongs to the IlvD/Edd family. In terms of assembly, homodimer. The cofactor is [2Fe-2S] cluster. It depends on Mg(2+) as a cofactor.

The catalysed reaction is (2R)-2,3-dihydroxy-3-methylbutanoate = 3-methyl-2-oxobutanoate + H2O. It carries out the reaction (2R,3R)-2,3-dihydroxy-3-methylpentanoate = (S)-3-methyl-2-oxopentanoate + H2O. It functions in the pathway amino-acid biosynthesis; L-isoleucine biosynthesis; L-isoleucine from 2-oxobutanoate: step 3/4. It participates in amino-acid biosynthesis; L-valine biosynthesis; L-valine from pyruvate: step 3/4. Functions in the biosynthesis of branched-chain amino acids. Catalyzes the dehydration of (2R,3R)-2,3-dihydroxy-3-methylpentanoate (2,3-dihydroxy-3-methylvalerate) into 2-oxo-3-methylpentanoate (2-oxo-3-methylvalerate) and of (2R)-2,3-dihydroxy-3-methylbutanoate (2,3-dihydroxyisovalerate) into 2-oxo-3-methylbutanoate (2-oxoisovalerate), the penultimate precursor to L-isoleucine and L-valine, respectively. The chain is Dihydroxy-acid dehydratase from Rhodopseudomonas palustris (strain HaA2).